The chain runs to 177 residues: Ribosome maturation factor RimM (177 aa).

Residues 100–177 (EDEYYWSDLV…TVLVAWPSDY (78 aa)) enclose the PRC barrel domain.

Belongs to the RimM family. In terms of assembly, binds ribosomal protein uS19.

It is found in the cytoplasm. Functionally, an accessory protein needed during the final step in the assembly of 30S ribosomal subunit, possibly for assembly of the head region. Essential for efficient processing of 16S rRNA. May be needed both before and after RbfA during the maturation of 16S rRNA. It has affinity for free ribosomal 30S subunits but not for 70S ribosomes. In Psychrobacter arcticus (strain DSM 17307 / VKM B-2377 / 273-4), this protein is Ribosome maturation factor RimM.